The sequence spans 227 residues: UPF0758 protein llmg_1515 (227 aa).

The 123-residue stretch at 103–225 (QVLSSKEYGM…YYSFRERDSN (123 aa)) folds into the MPN domain. Residues His-174, His-176, and Asp-187 each coordinate Zn(2+). The JAMM motif signature appears at 174-187 (HNHPSGNLQPSQAD).

The protein belongs to the UPF0758 family.

The polypeptide is UPF0758 protein llmg_1515 (Lactococcus lactis subsp. cremoris (strain MG1363)).